The chain runs to 1366 residues: Collagen alpha-2(I) chain (1366 aa).

The signal sequence occupies residues 1–22 (MLSFVDTRTLLLLAVTSCLATC). At Gln23 the chain carries Pyrrolidone carboxylic acid. Positions 23 to 79 (QSLQEATARKGPTGDRGPRGERGPPGPPGRDGDDGIPGPPGPPGPPGPPGLGGNFAA) are cleaved as a propeptide — N-terminal propeptide. Residues 27 to 1131 (EATARKGPTG…PRSPPSLRPK (1105 aa)) form a disordered region. Residues 34 to 44 (PTGDRGPRGER) show a composition bias toward basic and acidic residues. Over residues 59-71 (PGPPGPPGPPGPP) the composition is skewed to pro residues. Lys84 is modified (allysine). The segment covering 84 to 94 (KGVGLGPGPMG) has biased composition (gly residues). Positions 95–132 (LMGPRGPPGASGAPGPQGFQGPAGEPGEPGQTGPAGAR) are enriched in low complexity. The segment covering 141 to 155 (AGEDGHPGKPGRPGE) has biased composition (basic and acidic residues). A 5-hydroxylysine; alternate modification is found at Lys177. Lys177 carries an O-linked (Gal...) hydroxylysine; alternate glycan. 8 stretches are compositionally biased toward low complexity: residues 225 to 254 (VGAP…SAGP), 279 to 293 (AGPR…VSGP), 300 to 321 (PGAN…AGAP), 330 to 345 (PGPV…RGIV), 384 to 408 (NGEA…RGLP), 423 to 434 (RGATGPAGVRGP), 470 to 489 (LPGI…RGEP), and 513 to 531 (AGLA…NGAQ). Residues 538-547 (GVQGGKGEQG) are compositionally biased toward gly residues. Residues 594–611 (PGESGAAGPSGPIGSRGP) show a composition bias toward low complexity. Residues 634–643 (GASGPGGLPG) show a composition bias toward gly residues. Low complexity-rich tracts occupy residues 668–690 (NPGR…AGAT) and 717–737 (VGPA…QPGA). Positions 738–747 (KGERGTKGPK) are enriched in basic and acidic residues. Positions 756-765 (TGPIGSAGPS) are enriched in low complexity. Positions 775–784 (GSRGDGGPPG) are enriched in gly residues. Composition is skewed to low complexity over residues 785–795 (ATGFPGAAGRT), 863–876 (PQGL…LGLP), 893–932 (EPGP…NPGN), 951–974 (PGNI…PTGK), and 981–1001 (PGPA…PSGP). Residues 1005-1016 (RGDKGEPGEKGP) are compositionally biased toward basic and acidic residues. The segment covering 1089 to 1103 (AGPPGPPGPPGPPGP) has biased composition (pro residues). The propeptide at 1120–1366 (DQPRSPPSLR…RVDVGPVCFK (247 aa)) is C-terminal propeptide. The Fibrillar collagen NC1 domain maps to 1133–1366 (YEVDATLKSL…RVDVGPVCFK (234 aa)). 3 disulfides stabilise this stretch: Cys1163–Cys1195, Cys1203–Cys1364, and Cys1272–Cys1317. Ca(2+) contacts are provided by Asp1181, Asn1183, Gln1184, Cys1186, and Asp1189.

The protein belongs to the fibrillar collagen family. In terms of assembly, trimers of one alpha 2(I) and two alpha 1(I) chains. Interacts (via C-terminus) with TMEM131 (via PapD-L domain); the interaction is direct and is involved in assembly and TRAPPIII ER-to-Golgi transport complex-dependent secretion of collagen. Post-translationally, prolines at the third position of the tripeptide repeating unit (G-X-Y) are hydroxylated in some or all of the chains. In terms of tissue distribution, forms the fibrils of tendon, ligaments and bones. In bones the fibrils are mineralized with calcium hydroxyapatite.

The protein localises to the secreted. Its subcellular location is the extracellular space. It localises to the extracellular matrix. Type I collagen is a member of group I collagen (fibrillar forming collagen). The chain is Collagen alpha-2(I) chain (COL1A2) from Canis lupus familiaris (Dog).